The primary structure comprises 286 residues: Ribose-phosphate pyrophosphokinase (286 aa).

Residues 34-36 (DGE) and 91-93 (RQH) contribute to the ATP site. His-124 and Asp-161 together coordinate Mg(2+). Lys-184 is an active-site residue. Residues Arg-186, Asp-210, and 214-218 (STGGT) each bind D-ribose 5-phosphate.

The protein belongs to the ribose-phosphate pyrophosphokinase family. Class III (archaeal) subfamily. Homodimer. Mg(2+) is required as a cofactor.

It localises to the cytoplasm. It catalyses the reaction D-ribose 5-phosphate + ATP = 5-phospho-alpha-D-ribose 1-diphosphate + AMP + H(+). It functions in the pathway metabolic intermediate biosynthesis; 5-phospho-alpha-D-ribose 1-diphosphate biosynthesis; 5-phospho-alpha-D-ribose 1-diphosphate from D-ribose 5-phosphate (route I): step 1/1. In terms of biological role, involved in the biosynthesis of the central metabolite phospho-alpha-D-ribosyl-1-pyrophosphate (PRPP) via the transfer of pyrophosphoryl group from ATP to 1-hydroxyl of ribose-5-phosphate (Rib-5-P). The sequence is that of Ribose-phosphate pyrophosphokinase from Thermoplasma volcanium (strain ATCC 51530 / DSM 4299 / JCM 9571 / NBRC 15438 / GSS1).